A 240-amino-acid polypeptide reads, in one-letter code: LexA repressor (240 aa).

The H-T-H motif DNA-binding region spans F26–T46. A disordered region spans residues Q78–S113. Active-site for autocatalytic cleavage activity residues include S160 and K198.

This sequence belongs to the peptidase S24 family. As to quaternary structure, homodimer.

It carries out the reaction Hydrolysis of Ala-|-Gly bond in repressor LexA.. Represses a number of genes involved in the response to DNA damage (SOS response), including recA and lexA. In the presence of single-stranded DNA, RecA interacts with LexA causing an autocatalytic cleavage which disrupts the DNA-binding part of LexA, leading to derepression of the SOS regulon and eventually DNA repair. The polypeptide is LexA repressor (Rhizobium rhizogenes (strain K84 / ATCC BAA-868) (Agrobacterium radiobacter)).